The primary structure comprises 72 residues: Translation initiation factor IF-1 (72 aa).

An S1-like domain is found at 1–72; sequence MSKEDSIEVT…TKGRITFRHR (72 aa).

This sequence belongs to the IF-1 family. As to quaternary structure, component of the 30S ribosomal translation pre-initiation complex which assembles on the 30S ribosome in the order IF-2 and IF-3, IF-1 and N-formylmethionyl-tRNA(fMet); mRNA recruitment can occur at any time during PIC assembly.

It is found in the cytoplasm. Functionally, one of the essential components for the initiation of protein synthesis. Stabilizes the binding of IF-2 and IF-3 on the 30S subunit to which N-formylmethionyl-tRNA(fMet) subsequently binds. Helps modulate mRNA selection, yielding the 30S pre-initiation complex (PIC). Upon addition of the 50S ribosomal subunit IF-1, IF-2 and IF-3 are released leaving the mature 70S translation initiation complex. The polypeptide is Translation initiation factor IF-1 (Solibacter usitatus (strain Ellin6076)).